We begin with the raw amino-acid sequence, 186 residues long: Methylamine dehydrogenase light chain (186 aa).

The tat-type signal signal peptide spans 1-57 (MKKNTGFDSGIEKLARKTASKTGRRSFIGKLGGFLVGSALLPLLPVDRRGRMNEAHA). Cystine bridges form between C78–C143, C84–C116, C91–C176, C93–C141, C101–C132, and C133–C164. The residue at position 112 (W112) is a Tryptophylquinone. A cross-link (tryptophan tryptophylquinone (Trp-Trp)) is located at residues 112–163 (WVASCFNPGDGQTYLIAYRDCCGKQTCGRCNCVNVQGELPVYRPEFNNDIVW).

This sequence belongs to the aromatic amine dehydrogenase light chain family. As to quaternary structure, heterotetramer of two light and two heavy chains. Tryptophan tryptophylquinone residue serves as cofactor. Predicted to be exported by the Tat system. The position of the signal peptide cleavage has not been experimentally proven. Post-translationally, tryptophan tryptophylquinone (TTQ) is formed by oxidation of the indole ring of a tryptophan to form tryptophylquinone followed by covalent cross-linking with another tryptophan residue.

The protein resides in the periplasm. It carries out the reaction 2 oxidized [amicyanin] + methylamine + H2O = 2 reduced [amicyanin] + formaldehyde + NH4(+) + 2 H(+). It functions in the pathway one-carbon metabolism; methylamine degradation; formaldehyde from methylamine: step 1/1. Its function is as follows. Methylamine dehydrogenase carries out the oxidation of methylamine. Electrons are passed from methylamine dehydrogenase to amicyanin. The chain is Methylamine dehydrogenase light chain (mauA) from Methylobacillus flagellatus (strain ATCC 51484 / DSM 6875 / VKM B-1610 / KT).